A 416-amino-acid polypeptide reads, in one-letter code: Orexin/Hypocretin receptor type 1 (416 aa).

The tract at residues 1–22 (MEPSATPGAQPGVPTSSGEPFH) is disordered. Residues 1–46 (MEPSATPGAQPGVPTSSGEPFHLPPDYEDEFLRYLWRDYLYPKQYE) lie on the Extracellular side of the membrane. The segment at 26–41 (DYEDEFLRYLWRDYLY) is required for response to orexin-A. A helical transmembrane segment spans residues 47-67 (WVLIAAYVAVFLIALVGNTLV). Residues 68-82 (CLAVWRNHHMRTVTN) lie on the Cytoplasmic side of the membrane. The helical transmembrane segment at 83-105 (YFIVNLSLADVLVTAICLPASLL) threads the bilayer. Topologically, residues 106–119 (VDITESWLFGHALC) are extracellular. The cysteines at positions 119 and 202 are disulfide-linked. A helical membrane pass occupies residues 120 to 140 (KVIPYLQAVSVSVAVLTLSFI). Residues 141-160 (ALDRWYAICHPLLFKSTARR) are Cytoplasmic-facing. A helical transmembrane segment spans residues 161 to 182 (ARGSILGIWAVSLAVMVPQAAV). Residues 183-213 (MECSSVLPELANRTRLFSVCDERWADELYPK) lie on the Extracellular side of the membrane. Asn194 carries an N-linked (GlcNAc...) asparagine glycan. The chain crosses the membrane as a helical span at residues 214 to 235 (IYHSCFFFVTYLAPLGLMGMAY). Residues 236–298 (FQIFRKLWGP…QMRARRKTAK (63 aa)) are Cytoplasmic-facing. The helical transmembrane segment at 299–321 (MLMVVLLVFALCYLPISVLNVLK) threads the bilayer. At 322-336 (RVFGMFRQASDREAV) the chain is on the extracellular side. A helical membrane pass occupies residues 337–360 (YACFTFSHWLVYANSAANPIIYNF). Topologically, residues 361-416 (LSGKFREQFKAAFSCCLPGLGPSSSARHKSLSLQSRCSVSKVSEHVVLTTVTTVLS) are cytoplasmic.

This sequence belongs to the G-protein coupled receptor 1 family. As to expression, highly expressed in the brain in the prefrontal cortex, hippocampus, paraventricular thalamus, ventromedial hypothalamus, arcuate nucleus, dorsal raphe nucleus, and locus coeruleus. Not detected in the spleen, lung, liver, skeletal muscle, kidney and testis. Orexin receptor mRNA expression has also been reported in the adrenal gland, enteric nervous system, and pancreas.

The protein localises to the cell membrane. Functionally, moderately selective excitatory receptor for orexin-A and, with a lower affinity, for orexin-B neuropeptide. Triggers an increase in cytoplasmic Ca(2+) levels in response to orexin-A binding. In Rattus norvegicus (Rat), this protein is Orexin/Hypocretin receptor type 1.